Here is a 98-residue protein sequence, read N- to C-terminus: Large ribosomal subunit protein bL25 (98 aa).

Residues 1–23 are disordered; sequence MANFVLNAQARAEDKQGKGASRR.

It belongs to the bacterial ribosomal protein bL25 family. As to quaternary structure, part of the 50S ribosomal subunit; part of the 5S rRNA/L5/L18/L25 subcomplex. Contacts the 5S rRNA. Binds to the 5S rRNA independently of L5 and L18.

In terms of biological role, this is one of the proteins that binds to the 5S RNA in the ribosome where it forms part of the central protuberance. The polypeptide is Large ribosomal subunit protein bL25 (Acinetobacter baumannii (strain ATCC 17978 / DSM 105126 / CIP 53.77 / LMG 1025 / NCDC KC755 / 5377)).